Here is a 20-residue protein sequence, read N- to C-terminus: Tetracycline resistance leader peptide (20 aa).

The interval 1–20 (MKCNKMNRVQLKEGSVSMTL) is disordered.

In Bacillus subtilis (strain 168), this protein is Tetracycline resistance leader peptide (tetL).